We begin with the raw amino-acid sequence, 579 residues long: Tricyclene synthase 0e23, chloroplastic (579 aa).

Residues 1–66 (MAFCISYLGA…ALCLNAHSTS (66 aa)) constitute a chloroplast transit peptide. N-linked (GlcNAc...) asparagine glycans are attached at residues asparagine 27, asparagine 204, and asparagine 317. Residues aspartate 336 and aspartate 340 each coordinate Mg(2+). Residues 336–340 (DDIFD) carry the DDXXD motif motif. N-linked (GlcNAc...) asparagine glycosylation is found at asparagine 382 and asparagine 463. Residues asparagine 480 and glutamate 488 each coordinate Mg(2+). Asparagine 507 carries N-linked (GlcNAc...) asparagine glycosylation.

It belongs to the terpene synthase family. Tpsg subfamily. Mg(2+) serves as cofactor. Requires Mn(2+) as cofactor. As to expression, accumulates in flowers; mostly expressed in both upper and lower petal lobes, and, to a lower extent, in tube and stamens.

It localises to the plastid. It is found in the chloroplast stroma. It catalyses the reaction (2E)-geranyl diphosphate = tricyclene + diphosphate. It carries out the reaction (2E)-geranyl diphosphate = (E)-beta-ocimene + diphosphate. The protein operates within secondary metabolite biosynthesis; terpenoid biosynthesis. Its function is as follows. Contributes to floral scent emission. The protein is Tricyclene synthase 0e23, chloroplastic (0e23) of Antirrhinum majus (Garden snapdragon).